We begin with the raw amino-acid sequence, 447 residues long: Cysteine--tRNA ligase (447 aa).

Cys-28 is a binding site for Zn(2+). Positions 30–40 (PTVYNYIHIGN) match the 'HIGH' region motif. Zn(2+) contacts are provided by Cys-211, His-236, and Glu-240. A 'KMSKS' region motif is present at residues 268–272 (KMSKS). Residue Lys-271 participates in ATP binding.

It belongs to the class-I aminoacyl-tRNA synthetase family. In terms of assembly, monomer. Requires Zn(2+) as cofactor.

It is found in the cytoplasm. The catalysed reaction is tRNA(Cys) + L-cysteine + ATP = L-cysteinyl-tRNA(Cys) + AMP + diphosphate. The polypeptide is Cysteine--tRNA ligase (Streptococcus agalactiae serotype Ia (strain ATCC 27591 / A909 / CDC SS700)).